Here is a 751-residue protein sequence, read N- to C-terminus: Cyanobacterial phytochrome B (751 aa).

Cysteine 17 is a binding site for a tetrapyrrole. Residues 22–511 form a chromophore binding domain region; it reads IHIPGLIQPH…RSAIIGIVLQ (490 aa). Residues 152 to 320 form the GAF domain; that stretch reads TTTEISQILA…MTSVEMSAKE (169 aa). The Histidine kinase domain maps to 536–751; it reads IASHDLKEPL…STFYFTLQDV (216 aa). The residue at position 539 (histidine 539) is a Phosphohistidine; by autocatalysis.

The protein in the N-terminal section; belongs to the phytochrome family. Contains one covalently linked tetrapyrrole chromophore.

It catalyses the reaction ATP + protein L-histidine = ADP + protein N-phospho-L-histidine.. In terms of biological role, photoreceptor which exists in two forms that are reversibly interconvertible by light: the R form that absorbs maximally in the red region of the spectrum and the FR form that absorbs maximally in the far-red region. The polypeptide is Cyanobacterial phytochrome B (bphB) (Nostoc sp. (strain PCC 7120 / SAG 25.82 / UTEX 2576)).